The following is a 72-amino-acid chain: Putative beta-neurotoxin (72 aa).

An N-terminal signal peptide occupies residues 1–7; sequence IDMVVEC. Positions 9–71 constitute an LCN-type CS-alpha/beta domain; that stretch reads KDGYLMEHDG…TWSRATNRCG (63 aa). 4 disulfide bridges follow: Cys-19–Cys-70, Cys-23–Cys-45, Cys-31–Cys-51, and Cys-35–Cys-53.

As to expression, expressed by the venom gland.

It localises to the secreted. Functionally, beta toxins bind voltage-independently at site-4 of sodium channels (Nav) and shift the voltage of activation toward more negative potentials thereby affecting sodium channel activation and promoting spontaneous and repetitive firing. This is Putative beta-neurotoxin from Tityus pachyurus (Colombian scorpion).